The primary structure comprises 146 residues: Mitochondrial DnaJ homolog 2 (146 aa).

In terms of domain architecture, J spans 85–146; sequence EALLILDISA…LERSVLLRKR (62 aa).

As to quaternary structure, interacts with PAM16/TIM16 and is recruited by the PAM complex.

Its subcellular location is the mitochondrion inner membrane. Plays a role in mitochondrial biogenesis and protein folding. Participates in the translocation of transit peptide-containing proteins from the inner membrane into the mitochondrial matrix in an ATP-dependent manner, probably by stimulating activity of mtHSP70 (SSC1). The sequence is that of Mitochondrial DnaJ homolog 2 (MDJ2) from Saccharomyces cerevisiae (strain ATCC 204508 / S288c) (Baker's yeast).